The primary structure comprises 1906 residues: Retinoic acid-induced protein 1 (1906 aa).

Disordered stretches follow at residues 1–261 (MQSF…APGQ), 273–299 (RLSY…RHHA), 335–370 (YQTF…LENF), 469–520 (VSRT…YLSG), 538–571 (SPAR…SDDS), and 656–712 (SAWP…GTKP). Positions 13-24 (KQQNYQQTSQET) are enriched in polar residues. Low complexity predominate over residues 66–75 (PSGTAAAVAA). Positions 124 to 134 (PQPPPPQPQPL) are enriched in pro residues. A compositionally biased stretch (low complexity) spans 213–226 (SQSFPTSSTYSSSV). The span at 252 to 261 (TASSSLAPGQ) shows a compositional bias: polar residues. Composition is skewed to low complexity over residues 278–291 (QQQQ…QQQQ) and 339–353 (SPSS…VGRS). Phosphoserine occurs at positions 339 and 345. Thr472 carries the phosphothreonine modification. Polar residues predominate over residues 541 to 563 (RVNSNSKAKPESVSTCSVTSPDD). Ser568 and Ser683 each carry phosphoserine. Thr696 carries the post-translational modification Phosphothreonine. At Ser805 the chain carries Phosphoserine. Residue Lys811 forms a Glycyl lysine isopeptide (Lys-Gly) (interchain with G-Cter in SUMO2) linkage. Residue Lys819 forms a Glycyl lysine isopeptide (Lys-Gly) (interchain with G-Cter in SUMO1) linkage. Ser880 and Ser892 each carry phosphoserine. Lys901 is covalently cross-linked (Glycyl lysine isopeptide (Lys-Gly) (interchain with G-Cter in SUMO1); alternate). Residue Lys901 forms a Glycyl lysine isopeptide (Lys-Gly) (interchain with G-Cter in SUMO2); alternate linkage. The segment covering 937–947 (KVQSWFESSLS) has biased composition (polar residues). 5 disordered regions span residues 937–1299 (KVQS…ETPD), 1344–1570 (FACK…PLDP), 1613–1637 (VVNS…SSSS), 1746–1775 (AAAA…SARG), and 1794–1819 (EEAA…GGEA). A compositionally biased stretch (basic and acidic residues) spans 950 to 962 (KPGEEGPDGERAP). Over residues 996-1005 (KSLRSRRVHR) the composition is skewed to basic residues. At Ser1064 the chain carries Phosphoserine. Thr1068 bears the Phosphothreonine mark. Over residues 1101–1119 (PSPKAASSPSNPAALPVAS) the composition is skewed to low complexity. Residue Ser1122 is modified to Phosphoserine. 2 consecutive short sequence motifs (nuclear localization signal) follow at residues 1160-1177 (RRRP…TKKL) and 1223-1240 (KRKS…RNLV). Low complexity predominate over residues 1242–1252 (RSRSSSSSNAS). Residues Ser1352, Ser1358, and Ser1374 each carry the phosphoserine modification. A Glycyl lysine isopeptide (Lys-Gly) (interchain with G-Cter in SUMO2) cross-link involves residue Lys1425. At Ser1431 the chain carries Phosphoserine. The segment covering 1444 to 1453 (PKKRSRKGRA) has biased composition (basic residues). Polar residues-rich tracts occupy residues 1482-1491 (SGTQGASEDN) and 1517-1534 (QPQT…YSSY). Positions 1535-1545 (SKRKRLTRGRA) are enriched in basic residues. Low complexity predominate over residues 1628 to 1637 (SSSASSSSSS). The C2HC pre-PHD-type zinc-finger motif lies at 1780 to 1835 (LQSCYCCDGREDGGEEAAPADKGRKHECSKEAPAEPGGEAQEHWVHEACAVWTGGV). Residues 1798-1812 (PADKGRKHECSKEAP) show a composition bias toward basic and acidic residues. The PHD-type zinc-finger motif lies at 1855 to 1903 (MMCSSCQEAGATIGCCHKGCLHTYHYPCASDAGCIFIEENFSLKCPKHK).

Expressed in all tissues examined with higher expression in the heart and brain. No expression was seen in the corpus callosum of the brain.

The protein resides in the cytoplasm. It localises to the nucleus. Transcriptional regulator of the circadian clock components: CLOCK, BMAL1, BMAL2, PER1/3, CRY1/2, NR1D1/2 and RORA/C. Positively regulates the transcriptional activity of CLOCK a core component of the circadian clock. Regulates transcription through chromatin remodeling by interacting with other proteins in chromatin as well as proteins in the basic transcriptional machinery. May be important for embryonic and postnatal development. May be involved in neuronal differentiation. This is Retinoic acid-induced protein 1 (RAI1) from Homo sapiens (Human).